The sequence spans 54 residues: IATVDCSDYPKPVCTLEDMPLCGSDNITYHNKCYFCNAVAHSNGTLTFSHFGKC.

One can recognise a Kazal-like domain in the interval 4–54 (VDCSDYPKPVCTLEDMPLCGSDNITYHNKCYFCNAVAHSNGTLTFSHFGKC). Disulfide bonds link cysteine 6-cysteine 36, cysteine 14-cysteine 33, and cysteine 22-cysteine 54. The N-linked (GlcNAc...) asparagine glycan is linked to asparagine 43.

It localises to the secreted. The chain is Ovomucoid from Carpococcyx renauldi (Coral-billed ground-cuckoo).